Consider the following 607-residue polypeptide: MSNEAYQHDHTVNPHQKIVVNSYDWLQFRDEQDHCKSKNPITHASPGVGSNAQNSDIAEAPQVFHPSYQSLVNVPSESPRPDQTSGSNPAVGLLHNAEDKASGQEEEGSQYEIQYSVFRPLHAYPTKGLAYEQLRRKEEQEQRENFNHLVSDCIEAVETFGRELERIQTGSSGSYFVYGTRADESVPVGVFKPKDEEPYGPFSPKWTKWAHRTFFPCLFGRSCLIPNLGYICESAASLLDRRLETHLVPYTDTASIESFNFYDNRKKWVLGYNLQKKKQKKLGSFQLFLKEYINADEFFHKYPLPGMYSDVKHSFHRKSSGEDINHKPETTRNLTDETEPSKQINSSPISTESEENSKFEWTESSLSQFRLELEKLIILDYIMRNTDRGLDNWMVKLIKLSNNKWRLKLAAIDNGLSFPWKHPDEWRLYPYGWLYLPLQLLAKPFSEQMRSHFLPILTSTNWWEESYQEFLALFSRDQDFNVRMWKKQWAVLKGQAFNVVETLKDPRQGPLELVRRTRCQVIDEKMQVPCCPPPVSIFKNAIDEPIGSYSTSPMVLPSTPSTIPFHAHNQSNSNPVYYDSTLHPFANKTVIAERLQIVNSTPVFTWC.

Residues Asn-73 to Asn-88 are compositionally biased toward polar residues. The tract at residues Asn-73–Leu-93 is disordered. The region spanning Gly-161–Ile-522 is the PI3K/PI4K catalytic domain. Positions Ile-167 to Gly-173 are G-loop. A disordered region spans residues Lys-318–Asn-356. The span at Ser-319–Thr-330 shows a compositional bias: basic and acidic residues. A compositionally biased stretch (polar residues) spans Ser-341–Thr-351. A catalytic loop region spans residues Arg-384–Asn-392. The activation loop stretch occupies residues Ala-411 to Tyr-431.

The protein belongs to the PI3/PI4-kinase family. Interacts with LAS17. It depends on Mg(2+) as a cofactor. Mn(2+) serves as cofactor.

It localises to the cell membrane. The protein localises to the vacuole membrane. The enzyme catalyses a 1,2-diacyl-sn-glycero-3-phospho-(1D-myo-inositol) + ATP = a 1,2-diacyl-sn-glycero-3-phospho-(1D-myo-inositol 4-phosphate) + ADP + H(+). Its function is as follows. May play a role in endocytic and/or exocytic pathways. The sequence is that of Phosphatidylinositol 4-kinase LSB6 (LSB6) from Saccharomyces cerevisiae (strain ATCC 204508 / S288c) (Baker's yeast).